The primary structure comprises 121 residues: Large ribosomal subunit protein uL18 (121 aa).

The protein belongs to the universal ribosomal protein uL18 family. As to quaternary structure, part of the 50S ribosomal subunit; part of the 5S rRNA/L5/L18/L25 subcomplex. Contacts the 5S and 23S rRNAs.

Functionally, this is one of the proteins that bind and probably mediate the attachment of the 5S RNA into the large ribosomal subunit, where it forms part of the central protuberance. In Burkholderia ambifaria (strain MC40-6), this protein is Large ribosomal subunit protein uL18.